The following is a 222-amino-acid chain: Ribonuclease S-3 (222 aa).

An N-terminal signal peptide occupies residues 1 to 22; it reads MVHVVMMVFLLIVLILCSSTVG. Q31 is an RNA binding site. C37 and C44 form a disulfide bridge. N40 is a glycosylation site (N-linked (GlcNAc...) asparagine). Residues H55, 92–93, F102, 105–106, and 109–110 contribute to the RNA site; these read NV, KE, and KH. The active-site Proton donor is H55. An intrachain disulfide couples C70 to C113. Active-site residues include E106 and K109. H110 serves as the catalytic Proton acceptor. A glycan (N-linked (GlcNAc...) asparagine) is linked at N138. Cystine bridges form between C177/C215 and C192/C203.

Belongs to the RNase T2 family. In terms of processing, N-linked core structure at Asn-138 contains xylose.

It carries out the reaction a ribonucleotidyl-ribonucleotide-RNA + H2O = a 3'-end 3'-phospho-ribonucleotide-RNA + a 5'-end dephospho-ribonucleoside-RNA + H(+). Its function is as follows. Self-incompatibility (SI) is the inherited ability of a flowering plant to prevent self-fertilization by discriminating between self and non-self pollen during pollination. In many species, self-incompatibility is controlled by the single, multiallelic locus S. The protein is Ribonuclease S-3 of Pyrus pyrifolia (Chinese pear).